A 118-amino-acid polypeptide reads, in one-letter code: Large ribosomal subunit protein uL24 (118 aa).

Residues 1 to 24 are disordered; the sequence is MSEQPHKQRTRTKRASLHEKQDQV.

This sequence belongs to the universal ribosomal protein uL24 family. Part of the 50S ribosomal subunit.

Functionally, one of two assembly initiator proteins, it binds directly to the 5'-end of the 23S rRNA, where it nucleates assembly of the 50S subunit. Located at the polypeptide exit tunnel on the outside of the subunit. The sequence is that of Large ribosomal subunit protein uL24 from Halobacterium salinarum (strain ATCC 700922 / JCM 11081 / NRC-1) (Halobacterium halobium).